Consider the following 103-residue polypeptide: Astacin-like peptidase p16 (103 aa).

A Peptidase M12A domain is found at 1–103 (NAIPGQHYRW…DAFSRDGSPM (103 aa)).

It depends on Zn(2+) as a cofactor.

Its function is as follows. Active against casein. Has a role as a digestive enzyme. The protein is Astacin-like peptidase p16 of Argiope aurantia (Black-and-yellow garden spider).